An 803-amino-acid polypeptide reads, in one-letter code: Palmitoyl thioesterase CPT1C (803 aa).

The Cytoplasmic portion of the chain corresponds to 1-52 (MAEAHQAVGFRPSLTSDGAEVELSAPVLQEIYLSGLRSWKRHLSRFWNDFLT). The chain crosses the membrane as a helical span at residues 53 to 75 (GVFPASPLSWLFLFSAIQLAWFL). Residues 76–103 (QLDPSLGLMEKIKELLPDWGGQHHGLRG) are Lumenal-facing. Residues 104–126 (VLAAALFASCLWGALIFTLHVAL) traverse the membrane as a helical segment. The Cytoplasmic segment spans residues 127–803 (RLLLSYHGWL…SKASMTSTDF (677 aa)). H470 serves as the catalytic Proton acceptor. Residue 552 to 564 (GKSFIRRCHLSSD) coordinates CoA. Y586, S588, and T599 together coordinate (R)-carnitine. The tract at residues 761-803 (LFQAGQHFKRRFRGSGKENSRHRCGFLSRQTGASKASMTSTDF) is required for interaction with GRIA1. Positions 772–803 (FRGSGKENSRHRCGFLSRQTGASKASMTSTDF) are disordered. Over residues 788–803 (SRQTGASKASMTSTDF) the composition is skewed to polar residues.

Belongs to the carnitine/choline acetyltransferase family. Peripherally associated with AMPAR complex. AMPAR complex consists of an inner core made of 4 pore-forming GluA/GRIA proteins (GRIA1, GRIA2, GRIA3 and GRIA4) and 4 major auxiliary subunits arranged in a twofold symmetry. One of the two pairs of distinct binding sites is occupied either by CNIH2, CNIH3 or CACNG2, CACNG3. The other harbors CACNG2, CACNG3, CACNG4, CACNG8 or GSG1L. This inner core of AMPAR complex is complemented by outer core constituents binding directly to the GluA/GRIA proteins at sites distinct from the interaction sites of the inner core constituents. Outer core constituents include at least PRRT1, PRRT2, CKAMP44/SHISA9, FRRS1L and NRN1. The proteins of the inner and outer core serve as a platform for other, more peripherally associated AMPAR constituents, including CPT1C. Alone or in combination, these auxiliary subunits control the gating and pharmacology of the AMPAR complex and profoundly impact their biogenesis and protein processing. Interacts with SACM1L; the interaction regulates SACM1L phosphatidylinositol-3-phosphatase activity and translocation to endoplasmic reticulum/trans Golgi network in a malonyl-CoA dependent manner. Interacts with ATL1. Expressed predominantly in brain and testis. Expressed in motor neurons.

Its subcellular location is the cell projection. It localises to the dendrite. It is found in the axon. The protein resides in the endoplasmic reticulum membrane. It carries out the reaction S-hexadecanoyl-L-cysteinyl-[protein] + H2O = L-cysteinyl-[protein] + hexadecanoate + H(+). Functionally, palmitoyl thioesterase specifically expressed in the endoplasmic reticulum of neurons. Modulates the trafficking of the glutamate receptor, AMPAR, to plasma membrane through depalmitoylation of GRIA1. Also regulates AMPR trafficking through the regulation of SACM1L phosphatidylinositol-3-phosphatase activity by interaction in a malonyl-CoA dependent manner. Binds malonyl-CoA and couples malonyl-CoA to ceramide levels, necessary for proper spine maturation and contributing to systemic energy homeostasis and appetite control. Binds to palmitoyl-CoA, but does not have carnitine palmitoyltransferase 1 catalytic activity or at very low levels. In Homo sapiens (Human), this protein is Palmitoyl thioesterase CPT1C.